Consider the following 345-residue polypeptide: Adenine deaminase (345 aa).

His-24, His-26, and His-204 together coordinate Zn(2+). Glu-207 serves as the catalytic Proton donor. Position 285 (Asp-285) interacts with Zn(2+). Asp-286 lines the substrate pocket.

The protein belongs to the metallo-dependent hydrolases superfamily. Adenosine and AMP deaminases family. Adenine deaminase type 2 subfamily. Requires Zn(2+) as cofactor.

It catalyses the reaction adenine + H2O + H(+) = hypoxanthine + NH4(+). Catalyzes the hydrolytic deamination of adenine to hypoxanthine. Plays an important role in the purine salvage pathway and in nitrogen catabolism. The polypeptide is Adenine deaminase (Albidiferax ferrireducens (strain ATCC BAA-621 / DSM 15236 / T118) (Rhodoferax ferrireducens)).